The primary structure comprises 308 residues: Isoaspartyl peptidase/L-asparaginase (308 aa).

N-acetylmethionine is present on M1. The active-site Nucleophile is T168. Substrate is bound by residues 196 to 199 and 219 to 222; these read RVGD and TGHG.

It belongs to the Ntn-hydrolase family. Heterodimer of an alpha and beta chain produced by autocleavage. This heterodimer may then dimerize in turn, giving rise to a heterotetramer. Cleaved into an alpha and beta chain by autocatalysis; this activates the enzyme. The N-terminal residue of the beta subunit is responsible for the nucleophile hydrolase activity. Expressed in brain, kidney, testis and tissues of the gastrointestinal tract. Present in sperm (at protein level). Over-expressed in uterine, mammary, prostatic and ovarian carcinoma.

Its subcellular location is the cytoplasm. It catalyses the reaction L-asparagine + H2O = L-aspartate + NH4(+). The enzyme catalyses Cleavage of a beta-linked Asp residue from the N-terminus of a polypeptide.. Glycine accelerates autocleavage into an alpha and beta chain. In terms of biological role, has both L-asparaginase and beta-aspartyl peptidase activity. May be involved in the production of L-aspartate, which can act as an excitatory neurotransmitter in some brain regions. Is highly active with L-Asp beta-methyl ester. Besides, has catalytic activity toward beta-aspartyl dipeptides and their methyl esters, including beta-L-Asp-L-Phe, beta-L-Asp-L-Phe methyl ester (aspartame), beta-L-Asp-L-Ala, beta-L-Asp-L-Leu and beta-L-Asp-L-Lys. Does not have aspartylglucosaminidase activity and is inactive toward GlcNAc-L-Asn. Likewise, has no activity toward glutamine. This chain is Isoaspartyl peptidase/L-asparaginase (ASRGL1), found in Homo sapiens (Human).